A 597-amino-acid polypeptide reads, in one-letter code: Gigaxonin (597 aa).

The region spanning 30-99 (CDAHLVLDGE…IFSGQIRLNE (70 aa)) is the BTB domain. The region spanning 134 to 236 (CIGIRDFALH…DSSYLREQML (103 aa)) is the BACK domain. Kelch repeat units follow at residues 274–326 (CIVT…SAEG), 327–374 (FLFV…EIDG), 376–421 (LYIL…AMKK), 422–468 (KIYA…GVAM), 470–522 (LYVF…VYGA), and 528–574 (SIYV…AALR).

In terms of assembly, interacts with TBCB. Interacts with CUL3. Part of a complex that contains CUL3, RBX1 and GAN. Interacts (via BTB domain) with UBA1. Interacts (via Kelch domains) with MAP1B (via C-terminus) and MAP1S (via C-terminus). Ubiquitinated by E3 ubiquitin ligase complex formed by CUL3 and RBX1 and probably targeted for proteasome-independent degradation. Expressed in brain, heart and muscle.

It is found in the cytoplasm. The protein localises to the cytoskeleton. It functions in the pathway protein modification; protein ubiquitination. Functionally, probable cytoskeletal component that directly or indirectly plays an important role in neurofilament architecture. May act as a substrate-specific adapter of an E3 ubiquitin-protein ligase complex which mediates the ubiquitination and subsequent proteasomal degradation of target proteins. Controls degradation of TBCB. Controls degradation of MAP1B and MAP1S, and is critical for neuronal maintenance and survival. In Homo sapiens (Human), this protein is Gigaxonin (GAN).